The chain runs to 391 residues: MRLFSIPPPTLLAGFLAVLIGYASSAAIIWQAAIVAGATTAQISGWMTALGLAMGVSTLTLTLWYRVPVLTAWSTPGAALLVTGLQGLTLNEAIGVFIVTNALIVLCGITGLFARLMRIIPHSLAAAMLAGILLRFGLQAFASLDGQFTLCGSMLLVWLATKAVAPRYAVIAAMIIGIVIVIAQGDVVTTDVVFKPVLPTYITPDFSFAHSLSVALPLFLVTMASQNAPGIAAMKAAGYSAPVSPLIVFTGLLALVFSPFGVYSVGIAAITAAICQSPEAHPDKDQRWLAAAVAGIFYLLAGLFGSAITGMMAALPVSWIQMLAGLALLSTIGGSLYQALHNERERDAAVVAFLVTASGLTLVGIGSAFWGLIAGGVCYVVLNLIADRNRY.

At 1–9 (MRLFSIPPP) the chain is on the cytoplasmic side. The helical transmembrane segment at 10 to 30 (TLLAGFLAVLIGYASSAAIIW) threads the bilayer. At 31–42 (QAAIVAGATTAQ) the chain is on the periplasmic side. Residues 43 to 63 (ISGWMTALGLAMGVSTLTLTL) traverse the membrane as a helical segment. Topologically, residues 64–93 (WYRVPVLTAWSTPGAALLVTGLQGLTLNEA) are cytoplasmic. Residues 94 to 114 (IGVFIVTNALIVLCGITGLFA) form a helical membrane-spanning segment. Topologically, residues 115–123 (RLMRIIPHS) are periplasmic. Residues 124-144 (LAAAMLAGILLRFGLQAFASL) form a helical membrane-spanning segment. Residues 145–167 (DGQFTLCGSMLLVWLATKAVAPR) are Cytoplasmic-facing. Residues 168–188 (YAVIAAMIIGIVIVIAQGDVV) form a helical membrane-spanning segment. The Periplasmic segment spans residues 189 to 200 (TTDVVFKPVLPT). A helical transmembrane segment spans residues 201 to 221 (YITPDFSFAHSLSVALPLFLV). Over 222–246 (TMASQNAPGIAAMKAAGYSAPVSPL) the chain is Cytoplasmic. Residues 247 to 267 (IVFTGLLALVFSPFGVYSVGI) form a helical membrane-spanning segment. The Periplasmic portion of the chain corresponds to 268–287 (AAITAAICQSPEAHPDKDQR). Residues 288-308 (WLAAAVAGIFYLLAGLFGSAI) traverse the membrane as a helical segment. At 309–311 (TGM) the chain is on the cytoplasmic side. Residues 312–332 (MAALPVSWIQMLAGLALLSTI) form a helical membrane-spanning segment. The Periplasmic portion of the chain corresponds to 333-361 (GGSLYQALHNERERDAAVVAFLVTASGLT). The chain crosses the membrane as a helical span at residues 362 to 382 (LVGIGSAFWGLIAGGVCYVVL). Over 383 to 391 (NLIADRNRY) the chain is Cytoplasmic.

It is found in the cell inner membrane. This chain is Inner membrane protein YdcO (ydcO), found in Escherichia coli (strain K12).